The following is a 121-amino-acid chain: Small ribosomal subunit protein uS13 (121 aa).

The tract at residues 94–121 (GLPMRGQRTRTNARTRKGPRKGAAALKK) is disordered.

This sequence belongs to the universal ribosomal protein uS13 family. Part of the 30S ribosomal subunit. Forms a loose heterodimer with protein S19. Forms two bridges to the 50S subunit in the 70S ribosome.

Its function is as follows. Located at the top of the head of the 30S subunit, it contacts several helices of the 16S rRNA. In the 70S ribosome it contacts the 23S rRNA (bridge B1a) and protein L5 of the 50S subunit (bridge B1b), connecting the 2 subunits; these bridges are implicated in subunit movement. Contacts the tRNAs in the A and P-sites. This chain is Small ribosomal subunit protein uS13, found in Delftia acidovorans (strain DSM 14801 / SPH-1).